Consider the following 373-residue polypeptide: Centrosomal protein of 41 kDa (373 aa).

Residues 89–127 are disordered; the sequence is QRLEDNDSATSEPDAEITAKTNGNGSPGEQSPSPVQFIN. 2 positions are modified to phosphoserine: serine 96 and serine 99. Positions 107-127 are enriched in polar residues; sequence AKTNGNGSPGEQSPSPVQFIN. Residue threonine 109 is modified to Phosphothreonine. A phosphoserine mark is found at serine 114 and serine 121. One can recognise a Rhodanese domain in the interval 169-266; it reads PDCPFLLLDV…LAQKFPEGLI (98 aa). Disordered stretches follow at residues 275-300 and 315-373; these read QQAL…ENKW and EEDQ…KPWK. Arginine 343 bears the Omega-N-methylarginine mark.

This sequence belongs to the CEP41 family. In terms of assembly, found in a complex with TTLL6.

The protein resides in the cytoplasm. Its subcellular location is the cytoskeleton. It localises to the microtubule organizing center. It is found in the centrosome. The protein localises to the cell projection. The protein resides in the cilium. Its subcellular location is the cilium basal body. Required during ciliogenesis for tubulin glutamylation in cilium. Probably acts by participating in the transport of TTLL6, a tubulin polyglutamylase, between the basal body and the cilium. The protein is Centrosomal protein of 41 kDa (CEP41) of Bos taurus (Bovine).